The sequence spans 447 residues: UDP-N-acetylmuramate--L-alanine ligase (447 aa).

Residue 108–114 coordinates ATP; that stretch reads GSHGKTS.

The protein belongs to the MurCDEF family.

The protein resides in the cytoplasm. The enzyme catalyses UDP-N-acetyl-alpha-D-muramate + L-alanine + ATP = UDP-N-acetyl-alpha-D-muramoyl-L-alanine + ADP + phosphate + H(+). It participates in cell wall biogenesis; peptidoglycan biosynthesis. In terms of biological role, cell wall formation. In Listeria monocytogenes serovar 1/2a (strain ATCC BAA-679 / EGD-e), this protein is UDP-N-acetylmuramate--L-alanine ligase.